A 224-amino-acid polypeptide reads, in one-letter code: UPF0758 protein Avin_02940 (224 aa).

Residues 102-224 enclose the MPN domain; that stretch reads ALESPQAVRD…PLSMAEQGWL (123 aa). The Zn(2+) site is built by H173, H175, and D186. The JAMM motif signature appears at 173–186; sequence HNHPSGIAEPSQAD.

This sequence belongs to the UPF0758 family.

This chain is UPF0758 protein Avin_02940, found in Azotobacter vinelandii (strain DJ / ATCC BAA-1303).